A 417-amino-acid chain; its full sequence is MAEYKNYTLNFGPVHPAAHGVLRLILELDGENVVRADPHVGLLHRGTEKLAEFKPYNQSIGYMDRLDYVSMMCNEHAYVMAIEKLLQLEVPERAKYIRVMFAEMTRILNHLLWVAACGIDLGAMTVFLYAFRVREDLFDCYEAVSGARMHAAYFRPGGVARDLPTQMPQYQKTRFTSKRKAKKLNEPRQGSMLDFLDHFVVDFEKSLDEIDTLLTDNRLWKQRTVDIGTVTAERAKELGFTGPMLRGSGVAWDLRKTQPYEVYHKLEFDIPIGANGDCYDRYLVRMAEMRESNKLIKQCVDWLRANPGPVLSDNHKVAPPKRNAMKNNMEELIHHFKLFSEGYCTPEGEVYVGTEHPKGEFGVYIKSDGANKPYRLKMRAPGFAHISAMDELLSGHMLADTPAIISTIDVVFGDVDR.

This sequence belongs to the complex I 49 kDa subunit family. As to quaternary structure, NDH-1 is composed of 14 different subunits. Subunits NuoB, C, D, E, F, and G constitute the peripheral sector of the complex.

The protein resides in the cell inner membrane. The catalysed reaction is a quinone + NADH + 5 H(+)(in) = a quinol + NAD(+) + 4 H(+)(out). NDH-1 shuttles electrons from NADH, via FMN and iron-sulfur (Fe-S) centers, to quinones in the respiratory chain. The immediate electron acceptor for the enzyme in this species is believed to be ubiquinone. Couples the redox reaction to proton translocation (for every two electrons transferred, four hydrogen ions are translocated across the cytoplasmic membrane), and thus conserves the redox energy in a proton gradient. The polypeptide is NADH-quinone oxidoreductase subunit D (Francisella tularensis subsp. novicida (strain U112)).